Here is a 393-residue protein sequence, read N- to C-terminus: Cytotoxic and regulatory T-cell molecule (393 aa).

An N-terminal signal peptide occupies residues 1 to 17 (MWWRVLSLLAWFPLQEA). The 97-residue stretch at 18-114 (SLTNHTETIT…VSTKEVKVIV (97 aa)) folds into the Ig-like V-type domain. Residues 18-287 (SLTNHTETIT…YLGLARKKSG (270 aa)) lie on the Extracellular side of the membrane. N-linked (GlcNAc...) asparagine glycans are attached at residues asparagine 21, asparagine 87, and asparagine 178. 2 disulfide bridges follow: cysteine 38/cysteine 98 and cysteine 141/cysteine 196. The Ig-like C2-type domain maps to 118–210 (PFKPILEASV…RGLQGRKLVA (93 aa)). Residues 225–273 (SDALERNSLSSQDPQQPTSTVSVTEDSSTSEIDKEEKEQTTQDPDLTTE) form a disordered region. Over residues 231–241 (NSLSSQDPQQP) the composition is skewed to polar residues. Residues 242–254 (TSTVSVTEDSSTS) are compositionally biased toward low complexity. Residues 255 to 264 (EIDKEEKEQT) show a composition bias toward basic and acidic residues. The helical transmembrane segment at 288-308 (ILLLTLVSFLIFILFIIVQLF) threads the bilayer. Residues 309–393 (IMKLRKAHVI…KHIQVPESIV (85 aa)) lie on the Cytoplasmic side of the membrane. Basic and acidic residues-rich tracts occupy residues 328-348 (HTLESYRSRSNNEETSSEEKN) and 374-387 (ENVQHSKLEEKHIQ). Disordered regions lie at residues 328–354 (HTLESYRSRSNNEETSSEEKNGQSSHP) and 374–393 (ENVQHSKLEEKHIQVPESIV). Positions 390–393 (ESIV) match the PDZ-binding motif.

This sequence belongs to the nectin family. Monomer. May form homodimer (via Ig-like V-type domain). Interacts (via Ig-like V-type domain) with CADM1 (via Ig-like V-type domain); the interaction competes with CRTAM homodimerization and CADM1 homodimerization. Interacts (via PDZ-binding motif) with SCRIB (via PDZ domain 3); the interaction promotes CRTAM and SCRIB polarization in a subset of CD4+ T-cells. In the immune system, expression is restricted to activated class-I MHC-restricted cells, including NKT and CD8 T-cells. Strongly expressed in spleen, thymus, small intestine, peripheral blood leukocyte, and in Purkinje neurons in cerebellum. Expressed at much lower levels in testis, ovary, colon, lung and lymphoid tissues.

The protein resides in the cell membrane. In terms of biological role, mediates heterophilic cell-cell adhesion which regulates the activation, differentiation and tissue retention of various T-cell subsets. Interaction with CADM1 promotes natural killer (NK) cell cytotoxicity and IFNG/interferon-gamma secretion by CD8+ T-cells in vitro as well as NK cell-mediated rejection of tumors expressing CADM1 in vivo. Regulates CD8+ T-cell proliferation in response to T-cell receptor (TCR) activation. Appears to be dispensable for CD8+ T-cell-mediated cytotoxicity. Interaction with SCRIB promotes the late phase of cellular polarization of a subset of CD4+ T-cells, which in turn regulates TCR-mediated proliferation and IFNG, IL17 and IL22 production. By interacting with CADM1 on CD8+ dendritic cells, regulates the retention of activated CD8+ T-cells within the draining lymph node. Required for the intestinal retention of intraepithelial CD4+ CD8+ T-cells and, to a lesser extent, intraepithelial and lamina propria CD8+ T-cells and CD4+ T-cells. Interaction with CADM1 promotes the adhesion to gut-associated CD103+ dendritic cells, which may facilitate the expression of gut-homing and adhesion molecules on T-cells and the conversion of CD4+ T-cells into CD4+ CD8+ T-cells. This is Cytotoxic and regulatory T-cell molecule from Homo sapiens (Human).